The sequence spans 363 residues: G-protein coupled receptor 6 (363 aa).

Residues 1–75 lie on the Extracellular side of the membrane; the sequence is MNASAAALNE…SGLLLSAVNP (75 aa). Residues Asn-2 and Asn-9 are each glycosylated (N-linked (GlcNAc...) asparagine). A disordered region spans residues 28–51; sequence AGTPDTSEWGPPAASAALGGGGGP. Residue Asn-52 is glycosylated (N-linked (GlcNAc...) asparagine). Residues 76–95 form a helical membrane-spanning segment; that stretch reads WDVLLCVSGTVIAGENALVV. The Cytoplasmic segment spans residues 96–107; that stretch reads ALIASTPALRTP. Residues 108–131 form a helical membrane-spanning segment; the sequence is MFVLVGSLATADLLAGCGLILHFV. At 132 to 143 the chain is on the extracellular side; the sequence is FQYVVPSETVSL. Residues 144 to 165 traverse the membrane as a helical segment; that stretch reads LMVGFLVASFAASVSSLLAITV. The Cytoplasmic portion of the chain corresponds to 166–186; the sequence is DRYLSLYNALTYYSRRTLLGV. A helical membrane pass occupies residues 187 to 206; the sequence is HLLLAATWTVSLGLGLLPVL. Residues 207–231 are Extracellular-facing; sequence GWNCLADRASCSVVRPLTRSHVALL. A helical transmembrane segment spans residues 232–250; sequence STSFFVVFGIMLHLYVRIC. The Cytoplasmic segment spans residues 251-278; that stretch reads QVVWRHAHQIALQQHCLAPPHLAATRKG. Residues 279-305 traverse the membrane as a helical segment; it reads VGTLAVVLGTFGASWLPFAIYCVVGSQ. Residues 306-310 lie on the Extracellular side of the membrane; it reads EDPAI. Residues 311–332 form a helical membrane-spanning segment; it reads YTYATLLPATYNSMINPIIYAF. Residues 333–363 are Cytoplasmic-facing; it reads RNQEIQRALWLLFCGCFQSKVPFRSRSPSEV. Cys-346 carries S-palmitoyl cysteine lipidation. Ser-357, Ser-359, and Ser-361 each carry phosphoserine.

Belongs to the G-protein coupled receptor 1 family. As to expression, expressed in the brain, with a prominent distribution in striatum.

Its subcellular location is the cell membrane. Orphan receptor with constitutive G(s) signaling activity that activate cyclic AMP. Promotes neurite outgrowth and blocks myelin inhibition in neurons. The sequence is that of G-protein coupled receptor 6 (Gpr6) from Rattus norvegicus (Rat).